The following is a 467-amino-acid chain: MIILPIAKILQGIILAADHEVIVQGWVRTRRDSKAGISFLSIYDGSCLDSLQVIINHDLPNYKSDVLHLTTGCSVVITGSIVTSIGVGQHFEIQAKNIKVLGWVKNPETYPITAKKHSLEFLREVAHLRPRTNIIGAVTRVRHTLAQAIHRFMHIEGFFWVSTPLITTFNCEGAGEMFRVSTLDLENLPYTSKGKINYEKDFFGKEAFLTVSGQLNGESYACALSKIYTFGPTFRAENSNTSRHLAEFWMVEPEVAFANLTDIAILAEKMLKYIFNAILIERVDDINFFAEQINKNIIKRLEQFISSNFAQIDYTEAIDILQNCKQKFDHTVFWGMDLFAEHERYLADKHFQAPVVVTNYPKDIKAFYMRINDDGKTVAAMDVLAPGIGEIIGGSQREERLAKLDQRLADRGLNIEDYWWYRDLRSYGTVPHSGFGLGLERLMIYITGMHNIRDVIPFPRNPRQASF.

Belongs to the class-II aminoacyl-tRNA synthetase family. As to quaternary structure, homodimer.

The protein resides in the cytoplasm. It catalyses the reaction tRNA(Asn) + L-asparagine + ATP = L-asparaginyl-tRNA(Asn) + AMP + diphosphate + H(+). The chain is Asparagine--tRNA ligase from Baumannia cicadellinicola subsp. Homalodisca coagulata.